Here is a 619-residue protein sequence, read N- to C-terminus: Mitogen-activated protein kinase kinase kinase 2 (619 aa).

Disordered stretches follow at residues 25-44 (LSLQ…QNDV), 126-168 (QATN…PPPG), 201-245 (LDPL…DNHQ), and 289-355 (RTQG…APTN). Serine 26 bears the Phosphoserine mark. Residues 43–122 (DVRVKFEHRG…KSLKILLVVN (80 aa)) form the PB1 domain. The segment covering 126–143 (QATNLEPSPSPEDLNNTP) has biased composition (polar residues). Residues serine 153 and serine 164 each carry the phosphoserine modification. The segment covering 203 to 219 (PLSLSSPENSGSGSCPS) has biased composition (low complexity). Phosphoserine is present on residues serine 239, serine 297, serine 311, serine 331, serine 344, and serine 349. A compositionally biased stretch (polar residues) spans 290 to 299 (TQGTSFRSPV). Positions 300 to 315 (SFSPTDHSLSTSSGSS) are enriched in low complexity. The segment covering 322–332 (DDSRIRRRGSD) has biased composition (basic and acidic residues). Over residues 336-346 (PTLTVTDISPP) the composition is skewed to polar residues. Residues 356–616 (WRLGKLLGQG…AEELLRHMFV (261 aa)) form the Protein kinase domain. ATP-binding positions include 362–370 (LGQGAFGRV) and lysine 385. The Proton acceptor role is filled by aspartate 483.

This sequence belongs to the protein kinase superfamily. STE Ser/Thr protein kinase family. MAP kinase kinase kinase subfamily. Self-associates. Binds both upstream activators and downstream substrates in multimolecular complexes. Interacts (via the kinase catalytic domain) with STK38. Interacts with XIAP/BIRC4. The cofactor is Mg(2+). Ubiquitination by XIAP/BIRC4 does not lead to proteasomal degradation. In terms of processing, autophosphorylated.

It is found in the cytoplasm. The protein localises to the nucleus. It carries out the reaction L-seryl-[protein] + ATP = O-phospho-L-seryl-[protein] + ADP + H(+). The catalysed reaction is L-threonyl-[protein] + ATP = O-phospho-L-threonyl-[protein] + ADP + H(+). Activated by phosphorylation on Thr-524. Interacts with PKN2; the interaction activates PKN2 kinase activity in a MAP3K2-independent kinase activity. Its function is as follows. Component of a protein kinase signal transduction cascade. Regulates the JNK and ERK5 pathways by phosphorylating and activating MAP2K5 and MAP2K7. Plays a role in caveolae kiss-and-run dynamics. The protein is Mitogen-activated protein kinase kinase kinase 2 (Map3k2) of Mus musculus (Mouse).